The chain runs to 148 residues: MQITSEIVNLIAAIMIFLGSIIALISSIGLIKFQDVFLRSHAATKSSTLSVLLTLVGVIIFFISSQGYLSVRLILALVFINLTSPVGGHLISRAAYRTGAYMYRKSDAPRQTNILLSSSENNTFEQLKQRAHEREERRRKTYEKEHDY.

The next 3 membrane-spanning stretches (helical) occupy residues 11 to 31, 51 to 71, and 72 to 92; these read IAAI…IGLI, VLLT…YLSV, and RLIL…HLIS. Residues 125-148 are disordered; sequence EQLKQRAHEREERRRKTYEKEHDY. Over residues 127 to 148 the composition is skewed to basic and acidic residues; sequence LKQRAHEREERRRKTYEKEHDY.

The protein belongs to the CPA3 antiporters (TC 2.A.63) subunit G family. May form a heterooligomeric complex that consists of seven subunits: mnhA2, mnhB2, mnhC2, mnhD2, mnhE2, mnhF2 and mnhG2.

It localises to the cell membrane. This Staphylococcus saprophyticus subsp. saprophyticus (strain ATCC 15305 / DSM 20229 / NCIMB 8711 / NCTC 7292 / S-41) protein is Putative antiporter subunit mnhG2 (mnhG2).